The chain runs to 313 residues: Methionyl-tRNA formyltransferase (313 aa).

109 to 112 (SLLP) is a binding site for (6S)-5,6,7,8-tetrahydrofolate.

Belongs to the Fmt family.

It catalyses the reaction L-methionyl-tRNA(fMet) + (6R)-10-formyltetrahydrofolate = N-formyl-L-methionyl-tRNA(fMet) + (6S)-5,6,7,8-tetrahydrofolate + H(+). In terms of biological role, attaches a formyl group to the free amino group of methionyl-tRNA(fMet). The formyl group appears to play a dual role in the initiator identity of N-formylmethionyl-tRNA by promoting its recognition by IF2 and preventing the misappropriation of this tRNA by the elongation apparatus. The sequence is that of Methionyl-tRNA formyltransferase from Thermotoga maritima (strain ATCC 43589 / DSM 3109 / JCM 10099 / NBRC 100826 / MSB8).